We begin with the raw amino-acid sequence, 140 residues long: Nucleoside diphosphate kinase (140 aa).

6 residues coordinate ATP: Lys11, Phe59, Arg87, Thr93, Arg104, and Asn114. His117 acts as the Pros-phosphohistidine intermediate in catalysis.

The protein belongs to the NDK family. In terms of assembly, homotetramer. Requires Mg(2+) as cofactor.

The protein localises to the cytoplasm. It carries out the reaction a 2'-deoxyribonucleoside 5'-diphosphate + ATP = a 2'-deoxyribonucleoside 5'-triphosphate + ADP. It catalyses the reaction a ribonucleoside 5'-diphosphate + ATP = a ribonucleoside 5'-triphosphate + ADP. Major role in the synthesis of nucleoside triphosphates other than ATP. The ATP gamma phosphate is transferred to the NDP beta phosphate via a ping-pong mechanism, using a phosphorylated active-site intermediate. The sequence is that of Nucleoside diphosphate kinase from Brucella anthropi (strain ATCC 49188 / DSM 6882 / CCUG 24695 / JCM 21032 / LMG 3331 / NBRC 15819 / NCTC 12168 / Alc 37) (Ochrobactrum anthropi).